The chain runs to 424 residues: Homoserine O-succinyltransferase (424 aa).

In terms of domain architecture, AB hydrolase-1 spans 67-381 (NAVLVCHALN…PHGHDAFLLD (315 aa)). S173 serves as the catalytic Nucleophile. Substrate is bound at residue R243. Active-site residues include D342 and H375. D376 contributes to the substrate binding site.

The protein belongs to the AB hydrolase superfamily. MetX family. In terms of assembly, homodimer.

Its subcellular location is the cytoplasm. It carries out the reaction L-homoserine + succinyl-CoA = O-succinyl-L-homoserine + CoA. It functions in the pathway amino-acid biosynthesis; L-methionine biosynthesis via de novo pathway; O-succinyl-L-homoserine from L-homoserine: step 1/1. In terms of biological role, transfers a succinyl group from succinyl-CoA to L-homoserine, forming succinyl-L-homoserine. In vitro, also has serine succinyl transferase activity. The polypeptide is Homoserine O-succinyltransferase (Bordetella petrii (strain ATCC BAA-461 / DSM 12804 / CCUG 43448)).